The primary structure comprises 57 residues: Large ribosomal subunit protein bL32c (57 aa).

Belongs to the bacterial ribosomal protein bL32 family.

Its subcellular location is the plastid. It is found in the chloroplast. The protein is Large ribosomal subunit protein bL32c of Vitis vinifera (Grape).